The chain runs to 162 residues: Protein S40-4 (162 aa).

Belongs to the senescence regulator S40 family.

It is found in the cytoplasm. The protein is Protein S40-4 of Arabidopsis thaliana (Mouse-ear cress).